Here is a 104-residue protein sequence, read N- to C-terminus: Small ribosomal subunit protein uS10 (104 aa).

This sequence belongs to the universal ribosomal protein uS10 family. Part of the 30S ribosomal subunit.

In terms of biological role, involved in the binding of tRNA to the ribosomes. In Xanthomonas oryzae pv. oryzae (strain MAFF 311018), this protein is Small ribosomal subunit protein uS10.